The chain runs to 71 residues: Sec-independent protein translocase protein TatA (71 aa).

The helical transmembrane segment at 1–21 (MGSFSMWHWLIVLAIVLLLFG) threads the bilayer. Residues 40–71 (KKGMSDDDTAPDGTPKPADQSKTVDHRADDHK) form a disordered region. A compositionally biased stretch (basic and acidic residues) spans 61 to 71 (KTVDHRADDHK).

The protein belongs to the TatA/E family. As to quaternary structure, the Tat system comprises two distinct complexes: a TatABC complex, containing multiple copies of TatA, TatB and TatC subunits, and a separate TatA complex, containing only TatA subunits. Substrates initially bind to the TatABC complex, which probably triggers association of the separate TatA complex to form the active translocon.

Its subcellular location is the cell inner membrane. Part of the twin-arginine translocation (Tat) system that transports large folded proteins containing a characteristic twin-arginine motif in their signal peptide across membranes. TatA could form the protein-conducting channel of the Tat system. The polypeptide is Sec-independent protein translocase protein TatA (Allorhizobium ampelinum (strain ATCC BAA-846 / DSM 112012 / S4) (Agrobacterium vitis (strain S4))).